The chain runs to 616 residues: Heme A synthase-mitochondrial ferredoxin fusion protein (616 aa).

The N-terminal 45 residues, 1-45, are a transit peptide targeting the mitochondrion; it reads MNISRSSGLMRQFLLQPLRKGCDISCLGRSSWRMSRSFSGSSVLN. The heme a synthase cox15-like stretch occupies residues 45 to 465; that stretch reads NEINLSRTKN…AALSLAQRLH (421 aa). The Mitochondrial matrix portion of the chain corresponds to 46-97; sequence EINLSRTKNLFLNDCKFNKNSFEKFFARRLSNSVAPTPGGILQETEKIPSKK. Residues 98-118 traverse the membrane as a helical segment; the sequence is VAFWLLGSSALVLAIVVVGGI. At 119–182 the chain is on the mitochondrial intermembrane side; that stretch reads TRLTESGLSI…NIFFWEWFHR (64 aa). Histidine 181 is a binding site for heme o. The chain crosses the membrane as a helical span at residues 183-203; sequence VLGRGIGLTILLPSIYMIVTK. Topologically, residues 204 to 212 are mitochondrial matrix; the sequence is RASPWLSKR. The helical transmembrane segment at 213–233 threads the bilayer; sequence LIGLTGLVGLQGVIGWWMVKS. The Mitochondrial intermembrane portion of the chain corresponds to 234 to 254; the sequence is GLSEELFSDGSHPRVSHYRLA. Residues 255 to 275 traverse the membrane as a helical segment; it reads THLAAAVALYIGLVWTGHGIL. Histidine 256 provides a ligand contact to heme o. The Mitochondrial matrix portion of the chain corresponds to 276–311; sequence QRHAFLKSMKSGSTSQLTSMVSSVQKMKGFRTSVNS. A helical membrane pass occupies residues 312-332; that stretch reads FVGLVLITLLSGAFVAGLDAG. At 333 to 380 the chain is on the mitochondrial intermembrane side; that stretch reads MIYCTFPEMGEGRLAPSKSELFDQRFCRKDDKSDLIWRNMIDNPSLVQ. The chain crosses the membrane as a helical span at residues 381–401; it reads LEHRILAITTFVAACGLFIFS. Position 383 (histidine 383) interacts with heme b. At 402–417 the chain is on the mitochondrial matrix side; that stretch reads RAKRNILPKKIKTSIN. The chain crosses the membrane as a helical span at residues 418–438; the sequence is VVTGVVTAQATLGIMTLIYVV. Residue proline 439 is a topological domain, mitochondrial intermembrane. Residues 440 to 460 form a helical membrane-spanning segment; that stretch reads VPLAALHQAGSLVTLTAALSL. Residue histidine 446 participates in heme b binding. The Mitochondrial matrix segment spans residues 461 to 616; it reads AQRLHPEYAL…RNIRLERPKA (156 aa). In terms of domain architecture, 2Fe-2S ferredoxin-type spans 502–606; the sequence is FRPSFHSEIK…GIRVRIPAQT (105 aa). Positions 516–616 are mitochondrial ferredoxin yah1-like; it reads GTGIKVFFVT…RNIRLERPKA (101 aa). [2Fe-2S] cluster is bound by residues cysteine 541, cysteine 547, cysteine 550, and cysteine 587.

It in the N-terminal section; belongs to the COX15/CtaA family. Type 2 subfamily. In the C-terminal section; belongs to the adrenodoxin/putidaredoxin family. As to quaternary structure, homodimer. Requires heme b as cofactor. The cofactor is [2Fe-2S] cluster. Post-translationally, the etp1 preprotein is cleaved into 2 chains after imort into mitochondria. The N-terminal chain containing a heme A synthase cox15-like domain etp1(cd) is a subunit of the membrane-embedded cytochrome c oxidase complex and functions in the respiratory chain. The C-terminal chain containing a ferredoxin yah1-like domain etp1(fd) is released and serves in the matrix as electron transfer protein.

The protein resides in the mitochondrion inner membrane. The protein localises to the mitochondrion matrix. It carries out the reaction Fe(II)-heme o + 2 A + H2O = Fe(II)-heme a + 2 AH2. It participates in porphyrin-containing compound metabolism; heme A biosynthesis; heme A from heme O: step 1/1. Functionally, catalyzes the second reaction in the biosynthesis of heme A, a prosthetic group of mitochondrial cytochrome c oxidase (CcO). Heme A is synthesized from heme B by two sequential enzymatic reactions catalyzed by heme O synthase (HOS) and heme A synthase (HAS). HAS catalyzes the conversion of heme O to heme A by two successive hydroxylations of the methyl group at C8, in a reaction that involves matrix ferredoxin and ferredoxin reductase. The first hydroxylation forms heme I, the second hydroxylation results in an unstable dihydroxymethyl group, which spontaneously dehydrates, resulting in the formyl group of heme A. In terms of biological role, iron-sulfur protein that transfers electrons in a wide variety of metabolic reactions. Involved in heme A biosynthesis and in iron-sulfur cluster assembly. Transfers electrons from adrenodoxin reductase arh1 to heme A synthase etp1(cd), a heme protein that catalyzes the conversion of heme O to heme A. Required for the de novo synthesis of Fe-S clusters on iron sulfur cluster assembly protein isu1. Interact in its reduced state with isu1 to productively deliver electrons for Fe-S cluster synthesis. Essential for coenzyme Q biosynthesis. May transfer the electrons required for the hydroxylation reaction performed by coq6. The protein is Heme A synthase-mitochondrial ferredoxin fusion protein of Schizosaccharomyces pombe (strain 972 / ATCC 24843) (Fission yeast).